Reading from the N-terminus, the 379-residue chain is Probable RNA 3'-terminal phosphate cyclase-like protein (379 aa).

Belongs to the RNA 3'-terminal cyclase family. Type 2 subfamily. In terms of assembly, part of the small subunit (SSU) processome, composed of more than 70 proteins and the RNA chaperone small nucleolar RNA (snoRNA) U3.

It is found in the nucleus. The protein resides in the nucleolus. In terms of biological role, part of the small subunit (SSU) processome, first precursor of the small eukaryotic ribosomal subunit. During the assembly of the SSU processome in the nucleolus, many ribosome biogenesis factors, an RNA chaperone and ribosomal proteins associate with the nascent pre-rRNA and work in concert to generate RNA folding, modifications, rearrangements and cleavage as well as targeted degradation of pre-ribosomal RNA by the RNA exosome. Does not have cyclase activity. The polypeptide is Probable RNA 3'-terminal phosphate cyclase-like protein (Caenorhabditis elegans).